The following is a 1545-amino-acid chain: Pentafunctional AROM polypeptide (1545 aa).

The interval 1-383 (MSGLIEKVSI…YEPKASYVND (383 aa)) is 3-dehydroquinate synthase. NAD(+) contacts are provided by residues 44 to 46 (DSN), 82 to 85 (EANK), 113 to 115 (GGV), and Asp118. Arg129 contributes to the 7-phospho-2-dehydro-3-deoxy-D-arabino-heptonate binding site. Residue 138–139 (TS) coordinates NAD(+). Residues Asp145 and Lys151 each coordinate 7-phospho-2-dehydro-3-deoxy-D-arabino-heptonate. Lys160 is a binding site for NAD(+). Asn161 is a 7-phospho-2-dehydro-3-deoxy-D-arabino-heptonate binding site. NAD(+) is bound by residues 178–181 (FLET) and Asn189. Zn(2+) is bound at residue Glu193. Residues 193–196 (EVVK) and Lys249 each bind 7-phospho-2-dehydro-3-deoxy-D-arabino-heptonate. Glu259 (proton acceptor; for 3-dehydroquinate synthase activity) is an active-site residue. 7-phospho-2-dehydro-3-deoxy-D-arabino-heptonate contacts are provided by residues 263–267 (RNLLN) and His270. His270 lines the Zn(2+) pocket. The active-site Proton acceptor; for 3-dehydroquinate synthase activity is His274. Positions 286 and 355 each coordinate 7-phospho-2-dehydro-3-deoxy-D-arabino-heptonate. His286 serves as a coordination point for Zn(2+). Residues 396–840 (VKDFNSAPST…WDILHTTFNV (445 aa)) are EPSP synthase. The active-site For EPSP synthase activity is Cys822. The interval 859-1049 (DKSIIVIGMR…IPNGRSAFVC (191 aa)) is shikimate kinase. 866–873 (GMRAAGKS) is a binding site for ATP. Positions 1050–1261 (LTYEDLAPVS…AAPGQLTLKE (212 aa)) are 3-dehydroquinase. The Proton acceptor; for 3-dehydroquinate dehydratase activity role is filled by His1166. Lys1195 serves as the catalytic Schiff-base intermediate with substrate; for 3-dehydroquinate dehydratase activity. The tract at residues 1274–1545 (RKKFYIVGKP…GYQFSSHIDL (272 aa)) is shikimate dehydrogenase.

This sequence in the N-terminal section; belongs to the sugar phosphate cyclases superfamily. Dehydroquinate synthase family. It in the 2nd section; belongs to the EPSP synthase family. The protein in the 3rd section; belongs to the shikimate kinase family. In the 4th section; belongs to the type-I 3-dehydroquinase family. This sequence in the C-terminal section; belongs to the shikimate dehydrogenase family. As to quaternary structure, homodimer. Zn(2+) is required as a cofactor.

The protein resides in the cytoplasm. It catalyses the reaction 7-phospho-2-dehydro-3-deoxy-D-arabino-heptonate = 3-dehydroquinate + phosphate. The enzyme catalyses 3-dehydroquinate = 3-dehydroshikimate + H2O. It carries out the reaction shikimate + NADP(+) = 3-dehydroshikimate + NADPH + H(+). The catalysed reaction is shikimate + ATP = 3-phosphoshikimate + ADP + H(+). It catalyses the reaction 3-phosphoshikimate + phosphoenolpyruvate = 5-O-(1-carboxyvinyl)-3-phosphoshikimate + phosphate. It functions in the pathway metabolic intermediate biosynthesis; chorismate biosynthesis; chorismate from D-erythrose 4-phosphate and phosphoenolpyruvate: step 2/7. Its pathway is metabolic intermediate biosynthesis; chorismate biosynthesis; chorismate from D-erythrose 4-phosphate and phosphoenolpyruvate: step 3/7. The protein operates within metabolic intermediate biosynthesis; chorismate biosynthesis; chorismate from D-erythrose 4-phosphate and phosphoenolpyruvate: step 4/7. It participates in metabolic intermediate biosynthesis; chorismate biosynthesis; chorismate from D-erythrose 4-phosphate and phosphoenolpyruvate: step 5/7. It functions in the pathway metabolic intermediate biosynthesis; chorismate biosynthesis; chorismate from D-erythrose 4-phosphate and phosphoenolpyruvate: step 6/7. Its function is as follows. The AROM polypeptide catalyzes 5 consecutive enzymatic reactions in prechorismate polyaromatic amino acid biosynthesis. The sequence is that of Pentafunctional AROM polypeptide from Komagataella phaffii (strain GS115 / ATCC 20864) (Yeast).